The sequence spans 203 residues: ATP-dependent Clp protease proteolytic subunit (203 aa).

The Nucleophile role is filled by S101. Residue H126 is part of the active site.

The protein belongs to the peptidase S14 family. Component of the chloroplastic Clp protease core complex.

It is found in the plastid. Its subcellular location is the chloroplast stroma. It catalyses the reaction Hydrolysis of proteins to small peptides in the presence of ATP and magnesium. alpha-casein is the usual test substrate. In the absence of ATP, only oligopeptides shorter than five residues are hydrolyzed (such as succinyl-Leu-Tyr-|-NHMec, and Leu-Tyr-Leu-|-Tyr-Trp, in which cleavage of the -Tyr-|-Leu- and -Tyr-|-Trp bonds also occurs).. Its function is as follows. Cleaves peptides in various proteins in a process that requires ATP hydrolysis. Has a chymotrypsin-like activity. Plays a major role in the degradation of misfolded proteins. The sequence is that of ATP-dependent Clp protease proteolytic subunit from Marchantia polymorpha (Common liverwort).